The chain runs to 340 residues: Glycerol-3-phosphate dehydrogenase [NAD(P)+] (340 aa).

Residues S12, W13, and K110 each coordinate NADPH. Residues K110, G141, and S143 each coordinate sn-glycerol 3-phosphate. A145 contacts NADPH. Positions 196, 249, 259, 260, and 261 each coordinate sn-glycerol 3-phosphate. The active-site Proton acceptor is the K196. R260 is an NADPH binding site. Positions 284 and 286 each coordinate NADPH.

This sequence belongs to the NAD-dependent glycerol-3-phosphate dehydrogenase family.

It localises to the cytoplasm. It catalyses the reaction sn-glycerol 3-phosphate + NAD(+) = dihydroxyacetone phosphate + NADH + H(+). The catalysed reaction is sn-glycerol 3-phosphate + NADP(+) = dihydroxyacetone phosphate + NADPH + H(+). It participates in membrane lipid metabolism; glycerophospholipid metabolism. In terms of biological role, catalyzes the reduction of the glycolytic intermediate dihydroxyacetone phosphate (DHAP) to sn-glycerol 3-phosphate (G3P), the key precursor for phospholipid synthesis. This chain is Glycerol-3-phosphate dehydrogenase [NAD(P)+], found in Latilactobacillus sakei subsp. sakei (strain 23K) (Lactobacillus sakei subsp. sakei).